A 486-amino-acid chain; its full sequence is N-succinylglutamate 5-semialdehyde dehydrogenase (486 aa).

Residue 220–225 participates in NAD(+) binding; sequence GSSRTG. Residues glutamate 243 and cysteine 277 contribute to the active site.

It belongs to the aldehyde dehydrogenase family. AstD subfamily.

The catalysed reaction is N-succinyl-L-glutamate 5-semialdehyde + NAD(+) + H2O = N-succinyl-L-glutamate + NADH + 2 H(+). It functions in the pathway amino-acid degradation; L-arginine degradation via AST pathway; L-glutamate and succinate from L-arginine: step 4/5. In terms of biological role, catalyzes the NAD-dependent reduction of succinylglutamate semialdehyde into succinylglutamate. This chain is N-succinylglutamate 5-semialdehyde dehydrogenase, found in Shewanella sediminis (strain HAW-EB3).